Consider the following 230-residue polypeptide: Large ribosomal subunit protein uL1 (230 aa).

Belongs to the universal ribosomal protein uL1 family. Part of the 50S ribosomal subunit.

Functionally, binds directly to 23S rRNA. The L1 stalk is quite mobile in the ribosome, and is involved in E site tRNA release. Protein L1 is also a translational repressor protein, it controls the translation of the L11 operon by binding to its mRNA. The chain is Large ribosomal subunit protein uL1 from Granulibacter bethesdensis (strain ATCC BAA-1260 / CGDNIH1).